A 690-amino-acid chain; its full sequence is Methionine--tRNA ligase (690 aa).

The 'HIGH' region signature appears at 13-23 (PYANGQIHIGH). Zn(2+) is bound by residues C144, C147, C157, and C160. The 'KMSKS' region signature appears at 335–339 (KMSKS). ATP is bound at residue K338. The region spanning 584–690 (DFAKIDLRVA…SGAVPGMRIR (107 aa)) is the tRNA-binding domain.

Belongs to the class-I aminoacyl-tRNA synthetase family. MetG type 1 subfamily. In terms of assembly, homodimer. Zn(2+) serves as cofactor.

It localises to the cytoplasm. It catalyses the reaction tRNA(Met) + L-methionine + ATP = L-methionyl-tRNA(Met) + AMP + diphosphate. Its function is as follows. Is required not only for elongation of protein synthesis but also for the initiation of all mRNA translation through initiator tRNA(fMet) aminoacylation. The sequence is that of Methionine--tRNA ligase from Cupriavidus metallidurans (strain ATCC 43123 / DSM 2839 / NBRC 102507 / CH34) (Ralstonia metallidurans).